Consider the following 358-residue polypeptide: 3-dehydroquinate synthase (358 aa).

Residues 72–77, 106–110, 130–131, Lys-143, and Lys-151 each bind NAD(+); these read GGERVK, GALLD, and ST. Zn(2+) is bound by residues Glu-184, His-245, and His-261.

It belongs to the sugar phosphate cyclases superfamily. Dehydroquinate synthase family. Requires NAD(+) as cofactor. The cofactor is Co(2+). Zn(2+) serves as cofactor.

It is found in the cytoplasm. It catalyses the reaction 7-phospho-2-dehydro-3-deoxy-D-arabino-heptonate = 3-dehydroquinate + phosphate. Its pathway is metabolic intermediate biosynthesis; chorismate biosynthesis; chorismate from D-erythrose 4-phosphate and phosphoenolpyruvate: step 2/7. Functionally, catalyzes the conversion of 3-deoxy-D-arabino-heptulosonate 7-phosphate (DAHP) to dehydroquinate (DHQ). In Aeropyrum pernix (strain ATCC 700893 / DSM 11879 / JCM 9820 / NBRC 100138 / K1), this protein is 3-dehydroquinate synthase (aroB).